The chain runs to 447 residues: Serine/threonine-protein phosphatase 2A 55 kDa regulatory subunit B gamma isoform (447 aa).

7 WD repeats span residues 22–61 (TEAD…KNAP), 87–128 (EIEE…KRPE), 171–209 (GHTY…RSFN), 220–260 (DLTE…LCDK), 279–317 (EIIS…RPIE), 334–375 (ESDC…DVTL), and 410–446 (DFTK…NSDM).

The protein belongs to the phosphatase 2A regulatory subunit B family. In terms of assembly, PP2A consists of a common heterodimeric core enzyme, composed of a 36 kDa catalytic subunit (subunit C) and a 65 kDa constant regulatory subunit (PR65 or subunit A), that associates with a variety of regulatory subunits. Proteins that associate with the core dimer include three families of regulatory subunits B (the R2/B/PR55/B55, R3/B''/PR72/PR130/PR59 and R5/B'/B56 families), the 48 kDa variable regulatory subunit, viral proteins, and cell signaling molecules. Interacts with IER5.

Functionally, the B regulatory subunit might modulate substrate selectivity and catalytic activity, and might also direct the localization of the catalytic enzyme to a particular subcellular compartment. The protein is Serine/threonine-protein phosphatase 2A 55 kDa regulatory subunit B gamma isoform (Ppp2r2c) of Mus musculus (Mouse).